A 737-amino-acid chain; its full sequence is Palmitoyltransferase akr1 (737 aa).

The interval 1-60 (MSSGDPPSGLQASGSNSSAALGLSPPSAPSGKSAATPPKVATDDASVELSSMKSERSPAK) is disordered. Topologically, residues 1–314 (MSSGDPPSGL…YVRDKAIMSK (314 aa)) are cytoplasmic. Over residues 7–38 (PSGLQASGSNSSAALGLSPPSAPSGKSAATPP) the composition is skewed to low complexity. 5 ANK repeats span residues 97–126 (EGIT…DVNA), 131–160 (SVAT…DPLL), 164–193 (QGYN…PVDV), 197–226 (QGHT…NPNA), and 230–259 (GGLA…DRFA). The next 2 membrane-spanning stretches (helical) occupy residues 315-335 (FFFF…SNMV) and 336-356 (VYFA…VAKK). Over 357-372 (AASQGPSEFRIIQKTP) the chain is Cytoplasmic. The chain crosses the membrane as a helical span at residues 373–393 (FLAGVFAGSLFWVFVRYVLYV). The Lumenal portion of the chain corresponds to 394–402 (LPATYSTNP). The chain crosses the membrane as a helical span at residues 403–423 (FLNLGFVVFFSLTTYFYFYSM). Residues 424–500 (VADPGYVPKL…NCVGVNNLRQ (77 aa)) lie on the Cytoplasmic side of the membrane. A DHHC domain is found at 456 to 506 (NFCVYCMIRRPLRSKHCRRCSRCVAKHDHHCPWIDNCVGVNNLRQFVLYIL). Cys486 (S-palmitoyl cysteine intermediate) is an active-site residue. Residues 501–521 (FVLYILCLEIGIILFLHLTFN) traverse the membrane as a helical segment. Residues 522–549 (YINGLPAPAEPICNILNDQICSFVLRDT) are Lumenal-facing. The helical transmembrane segment at 550 to 570 (FTLLLDVWIAIQLVWVTMLGV) threads the bilayer. The Cytoplasmic portion of the chain corresponds to 571 to 737 (VQLVQVSRNQ…VAYDEAADIV (167 aa)).

This sequence belongs to the DHHC palmitoyltransferase family. AKR/ZDHHC17 subfamily.

It localises to the early endosome membrane. Its subcellular location is the golgi apparatus membrane. The catalysed reaction is L-cysteinyl-[protein] + hexadecanoyl-CoA = S-hexadecanoyl-L-cysteinyl-[protein] + CoA. In terms of biological role, palmitoyltransferase specific for casein kinase 1. This Emericella nidulans (strain FGSC A4 / ATCC 38163 / CBS 112.46 / NRRL 194 / M139) (Aspergillus nidulans) protein is Palmitoyltransferase akr1 (akr1).